We begin with the raw amino-acid sequence, 331 residues long: Biotin synthase (331 aa).

Positions 52-277 (PDVEVEGIIS…RTMLRFAGGR (226 aa)) constitute a Radical SAM core domain. Cys67, Cys71, and Cys74 together coordinate [4Fe-4S] cluster. 4 residues coordinate [2Fe-2S] cluster: Cys110, Cys143, Cys202, and Arg272.

This sequence belongs to the radical SAM superfamily. Biotin synthase family. Homodimer. [4Fe-4S] cluster is required as a cofactor. [2Fe-2S] cluster serves as cofactor.

The catalysed reaction is (4R,5S)-dethiobiotin + (sulfur carrier)-SH + 2 reduced [2Fe-2S]-[ferredoxin] + 2 S-adenosyl-L-methionine = (sulfur carrier)-H + biotin + 2 5'-deoxyadenosine + 2 L-methionine + 2 oxidized [2Fe-2S]-[ferredoxin]. It functions in the pathway cofactor biosynthesis; biotin biosynthesis; biotin from 7,8-diaminononanoate: step 2/2. Its function is as follows. Catalyzes the conversion of dethiobiotin (DTB) to biotin by the insertion of a sulfur atom into dethiobiotin via a radical-based mechanism. This chain is Biotin synthase, found in Mycobacterium sp. (strain JLS).